The sequence spans 1367 residues: Collagen alpha-1(XV) chain (1367 aa).

The N-terminal stretch at 1–31 (MTHRRTAQGRRPRWLLSIISALLSAVLQTRA) is a signal peptide. The Laminin G-like domain maps to 54–249 (SVSFTTGYGG…SSASGEASGF (196 aa)). Residues 229–604 (RTPEELCEAQ…DIVGNEDLLR (376 aa)) form a nonhelical region 1 (NC1) region. O-linked (Xyl...) (chondroitin sulfate) serine glycosylation is found at S243 and S247. Residues 267–319 (APPKESHVDPISVPPTSSSPAEDSELSGEPVPEGTPETNLSIIGHSSPEQGSG) form a disordered region. Residues N305 and N323 are each glycosylated (N-linked (GlcNAc...) asparagine). S341 carries O-linked (Xyl...) (chondroitin sulfate) serine glycosylation. N-linked (GlcNAc...) asparagine glycans are attached at residues N348, N375, and N402. 2 disordered regions span residues 396-446 (DTPD…SHGE) and 529-784 (TAEP…GHVE). The span at 402 to 429 (NLTTTASGDGEVPTSTDGDTEADSSPTG) shows a compositional bias: polar residues. The span at 434-446 (KPREEATLGSHGE) shows a compositional bias: basic and acidic residues. A compositionally biased stretch (pro residues) spans 555-564 (PSGPPLPTPT). The segment covering 582–595 (GPVGGLDEGSGSGD) has biased composition (gly residues). Collagen-like domains are found at residues 605 to 665 (GPPG…GMKG) and 666 to 717 (EKGA…PPGP). The triple-helical region 1 (COL1) stretch occupies residues 605–718 (GPPGPPGPPG…PGPPGPPGPG (114 aa)). The span at 606 to 616 (PPGPPGPPGSP) shows a compositional bias: pro residues. N673 is a glycosylation site (N-linked (GlcNAc...) asparagine). The span at 703–717 (MGPPGPPGPPGPPGP) shows a compositional bias: pro residues. Positions 719-748 (CTTELGFEIEGSGDVRLLSKPTISGPTSPS) are nonhelical region 2 (NC2). S730 is a glycosylation site (O-linked (Xyl...) (chondroitin sulfate) serine). Low complexity predominate over residues 737–750 (SKPTISGPTSPSGP). The triple-helical region 2 (COL2) stretch occupies residues 749–783 (GPKGEKGEQGAKGERGADGTSTMGPPGPRGPPGHV). Positions 751 to 765 (KGEKGEQGAKGERGA) are enriched in basic and acidic residues. Positions 784–807 (EVLSSSLINITNGSMNFSDIPELM) are nonhelical region 3 (NC3). 3 N-linked (GlcNAc...) asparagine glycosylation sites follow: N792, N795, and N799. 2 consecutive Collagen-like domains span residues 808-850 (GPPG…GEPG) and 863-912 (KGRK…GDRG). The triple-helical region 3 (COL3) stretch occupies residues 808–852 (GPPGPDGVPGLPGFPGPRGPKGDTGVPGFPGLKGEQGEKGEPGAI). Residues 853–863 (LTGDVPLEMMK) are nonhelical region 4 (NC4). The segment at 864–934 (GRKGEPGIHG…PGPPGPPGAV (71 aa)) is triple-helical region 4 (COL4). A disordered region spans residues 905–930 (KGAKGDRGVTLPGPPGLPGPPGPPGP). Residues 916-930 (PGPPGLPGPPGPPGP) show a composition bias toward pro residues. A nonhelical region 5 (NC5) region spans residues 935 to 968 (VNIKGAVFPIPARPHCKTPVGTAHPGDPELVTFH). Residues 969–998 (GVKGEKGSWGLPGSKGEKGDQGAQGPPGPP) are triple-helical region 5 (COL5). Disordered stretches follow at residues 974–1000 (KGSW…PPVD) and 1055–1089 (GPPG…PAIL). The segment at 999–1031 (VDPAYLRHFLNSLKGENEDASFRGESSNNLFVS) is nonhelical region 6 (NC6). Residues 1032 to 1086 (GPPGLPGYPGLVGQKGEAVVGPQGPPGIPGLPGPPGFGRPGVPGPPGPPGPPGPP) form a triple-helical region 6 (COL6) region. Pro residues predominate over residues 1055–1086 (GPPGIPGLPGPPGFGRPGVPGPPGPPGPPGPP). The interval 1087-1096 (AILGAAVALP) is nonhelical region 7 (NC7). Residues 1097–1111 (GPPGPPGQPGLPGSR) form a triple-helical region 7 (COL7) region. The segment at 1112-1367 (NLVTALSDMG…ENSFMTDTRK (256 aa)) is nonhelical region 8 (NC8). 2 cysteine pairs are disulfide-bonded: C1216/C1356 and C1318/C1348.

It belongs to the multiplexin collagen family. In terms of assembly, trimer; disulfide-linked. As to quaternary structure, interacts moderately with EFEMP2. Prolines at the third position of the tripeptide repeating unit (G-X-Y) are hydroxylated in some or all of the chains. Post-translationally, O-glycosylated; contains chondroitin sulfate. As to expression, detected in testis, brain, heart, kidney, skeletal muscle and skin (at protein level). Detected in heart and skeletal muscle.

It is found in the secreted. Its subcellular location is the extracellular space. The protein resides in the extracellular matrix. In terms of biological role, structural protein that stabilizes microvessels and muscle cells, both in heart and in skeletal muscle. Restin potently inhibits angiogenesis. The sequence is that of Collagen alpha-1(XV) chain (Col15a1) from Mus musculus (Mouse).